We begin with the raw amino-acid sequence, 578 residues long: CTP synthase 2 (578 aa).

The 260-residue stretch at 305–564 folds into the Glutamine amidotransferase type-1 domain; sequence KIALVGKYTN…VAAASGTLGE (260 aa). Active-site for GATase activity residues include Cys404, His537, and Glu539.

Belongs to the CTP synthase family. Homodimer. Oligomerizes to a tetramer in the presence of its substrates UTP and ATP. It depends on Mg(2+) as a cofactor.

The protein localises to the cytoplasm. The enzyme catalyses UTP + L-glutamine + ATP + H2O = CTP + L-glutamate + ADP + phosphate + 2 H(+). It functions in the pathway pyrimidine metabolism; CTP biosynthesis via de novo pathway; CTP from UDP: step 2/2. With respect to regulation, activated by GTP. Subject to allosteric product inhibition by CTP. Inhibited by p-chloromercuriphenylsulfonic acid, N-ethylmaleimide and cyclopentenylcytosine (CPEC). Catalyzes the ATP-dependent amination of UTP to CTP with either L-glutamine or ammonia as the source of nitrogen. Plays an important role in the regulation of phospholipid synthesis. This chain is CTP synthase 2 (URA8), found in Saccharomyces cerevisiae (strain ATCC 204508 / S288c) (Baker's yeast).